The following is a 635-amino-acid chain: Kelch-like protein 31 (635 aa).

The region spanning 74–138 is the BTB domain; the sequence is CDLTVATKSK…AYSGKLTLSL (65 aa). Residues 173-274 form the BACK domain; the sequence is CMYVVNIADT…TPQDLVSHVQ (102 aa). Kelch repeat units lie at residues 318–366, 367–420, 421–467, 469–514, 516–566, and 567–615; these read VLLT…VLDG, FLYV…TFNG, LLFA…VIDG, ILVS…TVGD, AYVL…TLNN, and KIYL…VVTI.

Strongly expressed in fast skeletal muscle, and weakly in heart. Not expressed in other tissues.

This Danio rerio (Zebrafish) protein is Kelch-like protein 31 (klhl31).